A 593-amino-acid chain; its full sequence is Aspartate--tRNA(Asp/Asn) ligase (593 aa).

Glu-175 contacts L-aspartate. An aspartate region spans residues 199–202; that stretch reads QQYK. L-aspartate-binding residues include Arg-221 and His-452. An ATP-binding site is contributed by 221-223; that stretch reads RDE. Glu-486 serves as a coordination point for ATP. L-aspartate is bound at residue Arg-493. 538 to 541 serves as a coordination point for ATP; the sequence is GVDR.

Belongs to the class-II aminoacyl-tRNA synthetase family. Type 1 subfamily. As to quaternary structure, homodimer.

It localises to the cytoplasm. The enzyme catalyses tRNA(Asx) + L-aspartate + ATP = L-aspartyl-tRNA(Asx) + AMP + diphosphate. Its function is as follows. Aspartyl-tRNA synthetase with relaxed tRNA specificity since it is able to aspartylate not only its cognate tRNA(Asp) but also tRNA(Asn). Reaction proceeds in two steps: L-aspartate is first activated by ATP to form Asp-AMP and then transferred to the acceptor end of tRNA(Asp/Asn). The sequence is that of Aspartate--tRNA(Asp/Asn) ligase from Novosphingobium aromaticivorans (strain ATCC 700278 / DSM 12444 / CCUG 56034 / CIP 105152 / NBRC 16084 / F199).